The sequence spans 521 residues: Type II methyltransferase M.AluI (521 aa).

In terms of domain architecture, SAM-dependent MTase C5-type spans 8–491 (YSFVDLFAGI…REHVRRDRAL (484 aa)). Residue cysteine 84 is part of the active site.

It belongs to the class I-like SAM-binding methyltransferase superfamily. C5-methyltransferase family.

It carries out the reaction a 2'-deoxycytidine in DNA + S-adenosyl-L-methionine = a 5-methyl-2'-deoxycytidine in DNA + S-adenosyl-L-homocysteine + H(+). Its function is as follows. A methylase, recognizes the double-stranded sequence 5'-AGCT-3', methylates C-3 on both strands, and protects the DNA from cleavage by the AluI endonuclease. This Cellulosimicrobium cellulans (Arthrobacter luteus) protein is Type II methyltransferase M.AluI.